The sequence spans 122 residues: Zein-alpha B49 (122 aa).

It belongs to the zein family.

In terms of biological role, zeins are major seed storage proteins. This chain is Zein-alpha B49, found in Zea mays (Maize).